Here is a 119-residue protein sequence, read N- to C-terminus: uncharacterized protein (119 aa).

This is an uncharacterized protein from Homo sapiens (Human).